Consider the following 570-residue polypeptide: Ribosome-inactivating protein SNAI (570 aa).

Residues 1–28 (MRLVAKLLYLAVLAICGLGIHGALTHPR) form the signal peptide. N-linked (GlcNAc...) asparagine glycans are attached at residues Asn40, Asn62, and Asn144. Glu199 is a catalytic residue. An N-linked (GlcNAc...) asparagine glycan is attached at Asn260. 3 disulfide bridges follow: Cys284–Cys316, Cys332–Cys351, and Cys373–Cys385. 2 Ricin B-type lectin domains span residues 319-439 (VEVT…WTVG) and 441-566 (VEPL…WITT). A 1-alpha repeat occupies 329 to 369 (DGLCVDVRYGHYIDGNPVQLRPCGNECNQLWTFRTDGTIRW). Residues 370–405 (LGKCLTASSSVMIYDCNTVPPEATKWVVSIDGTITN) form a 1-beta repeat. The stretch at 408-440 (SGLVLTAPQAAEGTALSLENNIHAARQGWTVGD) is one 1-gamma repeat. A 2-alpha repeat occupies 452–489 (KQMCLRENGENNFVWLEDCVLNRVQQEWALYGDGTIRV). Cys455 and Cys470 form a disulfide bridge. An N-linked (GlcNAc...) asparagine glycan is attached at Asn492. One copy of the 2-beta repeat lies at 493–531 (RSLCVTSEDHEPSDLIVILKCEGSGNQRWVFNTNGTISN). Residues Cys496 and Cys513 are joined by a disulfide bond. N-linked (GlcNAc...) asparagine glycosylation occurs at Asn526. A 2-gamma repeat occupies 534 to 567 (AKLLMDVAQRDVSLRKIILYRPTGNPNQQWITTT).

Belongs to the ribosome-inactivating protein family. Type 2 RIP subfamily. In terms of assembly, tetramer of four pairs of disulfide bound A-B chains. Post-translationally, the precursor is processed in two chains, A and B, that are linked by a disulfide bond. A small truncated form corresponding roughly to the second ricin B-type lectin domain of the B chain, TrSNAI, can also be produced. In terms of processing, glycosylated. N-glycans of subunit A are (Man)2-3(Xyl)(GlcNAc)2(Fuc) at Asn-40, (GlcNAc)0-2(Man)3(Xyl)(GlcNAc)2(Fuc) or (Man)1-2(GlcNAc)2 at Asn-62, (Man)3(Xyl)(GlcNAc)2(Fuc)0-1 at Asn-144 and (GlcNAc)0-1(Man)3(Xyl)(GlcNAc)2(Fuc) at Asn-260. N-glycans of subunit B are (Man)3(Xyl)(GlcNAc)2(Fuc) at Asn-492 and (Man)6-9(GlcNAc)2 at Asn-526. In terms of tissue distribution, expressed in bark.

The enzyme catalyses Endohydrolysis of the N-glycosidic bond at one specific adenosine on the 28S rRNA.. Neu5Ac(alpha2-6)Gal/GalNAc specific agglutinin. Behaves as a type-2 ribosome-inactivating protein. Strongly inhibits mammalian but not plant ribosomes. The A chain is responsible for inhibiting protein synthesis through the catalytic inactivation of 60S ribosomal subunits by removing adenine from position 4,324 of 28S rRNA. The B chain binds to cell receptors and probably facilitates the entry into the cell of the A chain; B chains are also responsible for cell agglutination (lectin activity). Involved in plant defense against insects. In terms of biological role, binds Neu5Ac(alpha2-6)Gal/GalNAc but has no clear agglutination activity. The sequence is that of Ribosome-inactivating protein SNAI from Sambucus nigra (European elder).